Reading from the N-terminus, the 235-residue chain is Proteasome subunit alpha (235 aa).

Belongs to the peptidase T1A family. The 20S proteasome core is composed of 14 alpha and 14 beta subunits that assemble into four stacked heptameric rings, resulting in a barrel-shaped structure. The two inner rings, each composed of seven catalytic beta subunits, are sandwiched by two outer rings, each composed of seven alpha subunits. The catalytic chamber with the active sites is on the inside of the barrel. Has a gated structure, the ends of the cylinder being occluded by the N-termini of the alpha-subunits. Is capped by the proteasome-associated ATPase, ARC.

The protein localises to the cytoplasm. The protein operates within protein degradation; proteasomal Pup-dependent pathway. The formation of the proteasomal ATPase ARC-20S proteasome complex, likely via the docking of the C-termini of ARC into the intersubunit pockets in the alpha-rings, may trigger opening of the gate for substrate entry. Interconversion between the open-gate and close-gate conformations leads to a dynamic regulation of the 20S proteasome proteolysis activity. Its function is as follows. Component of the proteasome core, a large protease complex with broad specificity involved in protein degradation. The chain is Proteasome subunit alpha from Arthrobacter sp. (strain FB24).